The primary structure comprises 716 residues: MARMSFVIAACQLVLGLLMTSLTESSIQNSECPQLCVCEIRPWFTPQSTYREATTVDCNDLRLTRIPSNLSSDTQVLLLQSNNIAKTVDELQQLFNLTELDFSQNNFTNIKEVGLANLTQLTTLHLEENQITEMTDYCLQDLSNLQELYINHNQISTISAHAFAGLKNLLRLHLNSNKLKVIDSRWFDSTPNLEILMIGENPVIGILDMNFKPLANLRSLVLAGMYLTDIPGNALVGLDSLESLSFYDNKLVKVPQLALQKVPNLKFLDLNKNPIHKIQEGDFKNMLRLKELGINNMGELVSVDRYALDNLPELTKLEATNNPKLSYIHRLAFRSVPALESLMLNNNALNAIYQKTVESLPNLREISIHSNPLRCDCVIHWINSNKTNIRFMEPLSMFCAMPPEYKGHQVKEVLIQDSSEQCLPMISHDSFPNRLNVDIGTTVFLDCRAMAEPEPEIYWVTPIGNKITVETLSDKYKLSSEGTLEISNIQIEDSGRYTCVAQNVQGADTRVATIKVNGTLLDGTQVLKIYVKQTESHSILVSWKVNSNVMTSNLKWSSATMKIDNPHITYTARVPVDVHEYNLTHLQPSTDYEVCLTVSNIHQQTQKSCVNVTTKNAAFAVDISDQETSTALAAVMGSMFAVISLASIAVYFAKRFKRKNYHHSLKKYMQKTSSIPLNELYPPLINLWEGDSEKDKDGSADTKPTQVDTSRSYYMW.

Positions 1 to 25 (MARMSFVIAACQLVLGLLMTSLTES) are cleaved as a signal peptide. An LRRNT domain is found at 26-72 (SIQNSECPQLCVCEIRPWFTPQSTYREATTVDCNDLRLTRIPSNLSS). At 26–631 (SIQNSECPQL…DISDQETSTA (606 aa)) the chain is on the extracellular side. LRR repeat units follow at residues 73 to 95 (DTQV…QQLF), 96 to 117 (NLTE…GLAN), 120 to 141 (QLTT…CLQD), 144 to 165 (NLQE…AFAG), 168 to 189 (NLLR…WFDS), 192 to 213 (NLEI…NFKP), 216 to 237 (NLRS…ALVG), 240 to 261 (SLES…ALQK), 264 to 285 (NLKF…DFKN), 313 to 335 (ELTK…AFRS), and 338 to 359 (ALES…TVES). N-linked (GlcNAc...) asparagine glycans are attached at residues asparagine 96 and asparagine 117. Residues 371–424 (NPLRCDCVIHWINSNKTNIRFMEPLSMFCAMPPEYKGHQVKEVLIQDSSEQCLP) enclose the LRRCT domain. Residue asparagine 385 is glycosylated (N-linked (GlcNAc...) asparagine). The Ig-like C2-type domain occupies 424–515 (PMISHDSFPN…GADTRVATIK (92 aa)). Cysteine 447 and cysteine 499 are joined by a disulfide. N-linked (GlcNAc...) asparagine glycosylation is present at asparagine 517. The region spanning 525 to 617 (QVLKIYVKQT…SCVNVTTKNA (93 aa)) is the Fibronectin type-III domain. A helical transmembrane segment spans residues 632–652 (LAAVMGSMFAVISLASIAVYF). Over 653–716 (AKRFKRKNYH…VDTSRSYYMW (64 aa)) the chain is Cytoplasmic. The span at 691–700 (DSEKDKDGSA) shows a compositional bias: basic and acidic residues. Residues 691 to 716 (DSEKDKDGSADTKPTQVDTSRSYYMW) are disordered. The span at 702-716 (TKPTQVDTSRSYYMW) shows a compositional bias: polar residues.

The protein resides in the membrane. This Homo sapiens (Human) protein is Leucine-rich repeat neuronal protein 1 (LRRN1).